Here is a 422-residue protein sequence, read N- to C-terminus: Acyl-[acyl-carrier-protein] desaturase 6, chloroplastic (422 aa).

A chloroplast-targeting transit peptide spans 1-46; the sequence is MAATATMAMPLANRLRCKPNTNSSSPSRTLFGRRVTMISSSRWMCR. 6 residues coordinate Fe cation: Glu154, Glu192, His195, Glu245, Glu280, and His283.

It belongs to the fatty acid desaturase type 2 family. Homodimer. Fe(2+) serves as cofactor.

Its subcellular location is the plastid. It is found in the chloroplast. The protein operates within lipid metabolism; fatty acid metabolism. Its function is as follows. Introduces a cis double bond in the acyl chain of an acyl-[acyl-carrier protein]. This Oryza sativa subsp. indica (Rice) protein is Acyl-[acyl-carrier-protein] desaturase 6, chloroplastic.